The sequence spans 354 residues: Polyribonucleotide 5'-hydroxyl-kinase PYRAB01840 (354 aa).

Position 36–43 (36–43) interacts with ATP; the sequence is GDVDTGKT.

Requires a divalent metal cation as cofactor.

The enzyme catalyses a 5'-end dephospho-2'-deoxyribonucleoside-DNA + ATP = a 5'-end 5'-phospho-2'-deoxyribonucleoside-DNA + ADP + H(+). It carries out the reaction a 5'-end dephospho-ribonucleoside-RNA + ATP = a 5'-end 5'-phospho-ribonucleoside-RNA + ADP + H(+). Its function is as follows. Polynucleotide kinase that can phosphorylate the 5'-hydroxyl groups of both single-stranded RNA (ssRNA) and single-stranded DNA (ssDNA). Exhibits a strong preference for ssRNA. The protein is Polyribonucleotide 5'-hydroxyl-kinase PYRAB01840 of Pyrococcus abyssi (strain GE5 / Orsay).